We begin with the raw amino-acid sequence, 376 residues long: Nuclear egress protein 1 (376 aa).

At Ser19 the chain carries Phosphoserine. The disordered stretch occupies residues 22–57 (RKRRQRELASKVASTVNGATSANNHGEPPSPADARP). A compositionally biased stretch (polar residues) spans 33 to 45 (VASTVNGATSANN). A CCCH-type zinc finger spans residues 106–211 (CLDISPYGNE…HVIFENSDVH (106 aa)). The tract at residues 316–376 (VVSTNGCGPS…PLFLNSIRAP (61 aa)) is disordered. The segment covering 317–332 (VSTNGCGPSSSSQSTP) has biased composition (polar residues).

The protein belongs to the herpesviridae NEC1 protein family. As to quaternary structure, forms a heterohexameric complex with NEC2. Interacts with capsid vertex specific component 2/CVC2; this interaction directs the capsid to the host inner nuclear membrane to initiate budding. In terms of processing, phosphorylated at serine residues in the N-terminus. This phosphorylation regulates the localization within the inner nuclear membrane. Phosphorylation by viral kinase UL97 at Ser-19 plays an important role for correct viral nuclear egress complex (NEC) localization.

The protein resides in the host nucleus inner membrane. In terms of biological role, plays an essential role in virion nuclear egress, the first step of virion release from infected cell. Within the host nucleus, NEC1 interacts with the newly formed capsid through the vertexes and directs it to the inner nuclear membrane by associating with NEC2. Induces the budding of the capsid at the inner nuclear membrane as well as its envelopment into the perinuclear space. There, the NEC1/NEC2 complex promotes the fusion of the enveloped capsid with the outer nuclear membrane and the subsequent release of the viral capsid into the cytoplasm where it will reach the secondary budding sites in the host Golgi or trans-Golgi network. The sequence is that of Nuclear egress protein 1 from Homo sapiens (Human).